Reading from the N-terminus, the 311-residue chain is Malate dehydrogenase (311 aa).

NAD(+)-binding positions include 7–13 and Asp34; that span reads GAAGGIG. Residues Arg81 and Arg87 each contribute to the substrate site. NAD(+)-binding positions include Asn94 and 117–119; that span reads ITN. Residues Asn119 and Arg153 each contribute to the substrate site. The active-site Proton acceptor is His177. Position 227 (Met227) interacts with NAD(+).

Belongs to the LDH/MDH superfamily. MDH type 1 family. Homodimer.

It catalyses the reaction (S)-malate + NAD(+) = oxaloacetate + NADH + H(+). Functionally, catalyzes the reversible oxidation of malate to oxaloacetate. The protein is Malate dehydrogenase of Shewanella halifaxensis (strain HAW-EB4).